Consider the following 188-residue polypeptide: Protein-L-isoaspartate O-methyltransferase (188 aa).

The active site involves serine 33.

This sequence belongs to the methyltransferase superfamily. L-isoaspartyl/D-aspartyl protein methyltransferase family.

The protein resides in the cytoplasm. It catalyses the reaction [protein]-L-isoaspartate + S-adenosyl-L-methionine = [protein]-L-isoaspartate alpha-methyl ester + S-adenosyl-L-homocysteine. Catalyzes the methyl esterification of L-isoaspartyl residues in peptides and proteins that result from spontaneous decomposition of normal L-aspartyl and L-asparaginyl residues. It plays a role in the repair and/or degradation of damaged proteins. This is Protein-L-isoaspartate O-methyltransferase from Methanocella arvoryzae (strain DSM 22066 / NBRC 105507 / MRE50).